Here is a 717-residue protein sequence, read N- to C-terminus: Serologically defined colon cancer antigen 8 homolog (717 aa).

Ser-4 and Ser-28 each carry phosphoserine. A disordered region spans residues 84-115 (QTNKENETSPPRRRKLSPSRPSECDDGSMPTM). 4 coiled-coil regions span residues 129–168 (IHHL…KSQR), 221–278 (DANK…LAAS), 352–590 (EEAN…SEQY), and 622–712 (RSQI…LPSM). The tract at residues 216–717 (TASTGDANKW…QLPSMPQSDC (502 aa)) is sufficient for homodimerization.

Homodimer. Interacts with OFD1; the interaction is direct. Interacts with FAM161A. Interacts with RABEP2, ERC1 and CEP131. Expressed in liver, kidney, spleen, brain, heart and muscle. Expressed in photoreceptor cells of the retina.

The protein resides in the cytoplasm. Its subcellular location is the cytoskeleton. The protein localises to the microtubule organizing center. It localises to the centrosome. It is found in the centriole. The protein resides in the cilium basal body. Its subcellular location is the cell junction. Plays a role in the establishment of cell polarity and epithelial lumen formation. Also plays an essential role in ciliogenesis and subsequent Hedgehog signaling pathway that requires the presence of intact primary cilia for pathway activation. Mechanistically, interacts with and mediates RABEP2 centrosomal localization which is critical for ciliogenesis. The protein is Serologically defined colon cancer antigen 8 homolog (Sdccag8) of Mus musculus (Mouse).